Here is a 331-residue protein sequence, read N- to C-terminus: Phosphate acyltransferase (331 aa).

Belongs to the PlsX family. Homodimer. Probably interacts with PlsY.

It is found in the cytoplasm. The catalysed reaction is a fatty acyl-[ACP] + phosphate = an acyl phosphate + holo-[ACP]. The protein operates within lipid metabolism; phospholipid metabolism. In terms of biological role, catalyzes the reversible formation of acyl-phosphate (acyl-PO(4)) from acyl-[acyl-carrier-protein] (acyl-ACP). This enzyme utilizes acyl-ACP as fatty acyl donor, but not acyl-CoA. The sequence is that of Phosphate acyltransferase from Exiguobacterium sibiricum (strain DSM 17290 / CCUG 55495 / CIP 109462 / JCM 13490 / 255-15).